The following is a 177-amino-acid chain: Large ribosomal subunit protein uL6 (177 aa).

The protein belongs to the universal ribosomal protein uL6 family. In terms of assembly, part of the 50S ribosomal subunit.

This protein binds to the 23S rRNA, and is important in its secondary structure. It is located near the subunit interface in the base of the L7/L12 stalk, and near the tRNA binding site of the peptidyltransferase center. In Agrobacterium fabrum (strain C58 / ATCC 33970) (Agrobacterium tumefaciens (strain C58)), this protein is Large ribosomal subunit protein uL6.